A 354-amino-acid polypeptide reads, in one-letter code: S-adenosylmethionine:tRNA ribosyltransferase-isomerase (354 aa).

It belongs to the QueA family. Monomer.

It is found in the cytoplasm. It catalyses the reaction 7-aminomethyl-7-carbaguanosine(34) in tRNA + S-adenosyl-L-methionine = epoxyqueuosine(34) in tRNA + adenine + L-methionine + 2 H(+). The protein operates within tRNA modification; tRNA-queuosine biosynthesis. Functionally, transfers and isomerizes the ribose moiety from AdoMet to the 7-aminomethyl group of 7-deazaguanine (preQ1-tRNA) to give epoxyqueuosine (oQ-tRNA). This Pseudomonas syringae pv. syringae (strain B728a) protein is S-adenosylmethionine:tRNA ribosyltransferase-isomerase.